The chain runs to 300 residues: Forkhead transcription factor fkh-9 (300 aa).

The fork-head DNA-binding region spans 66–161; it reads RPSLSYKDLI…DKQTLRRRNR (96 aa). The interval 153–208 is disordered; it reads KQTLRRRNRQQPRALAKKSDAGRTLSRDDRGSSGSGETSPSPSQPSISPPNENPMP. The span at 169-183 shows a compositional bias: basic and acidic residues; the sequence is KKSDAGRTLSRDDRG. The segment covering 187–198 has biased composition (low complexity); that stretch reads SGETSPSPSQPS.

Expressed in mechanosensory neurons.

The protein localises to the nucleus. In terms of biological role, transcription factor. Binds to the regulatory elements of genes that contain the sequence motif 5'-TTGTTTCT-3'. Involved in regulating intestinal transcription of vitellogenin vit-2, acting in concert with transcription factors elt-2, mab-3 and daf-16, and also the TGF-beta/Sma/Mab pathway. Functions downstream of the insulin/IGF-1-like signaling (IIS) mediated pathway, in regeneration of axons after injury and in short-term memory, perhaps acting in neurons, and in modulation of longevity, perhaps acting non-neuronally. Plays a role in the modulation of endoplasmic reticulum (ER) homeostasis during chemical and pathogen stress, including exposure to the Gram-negative bacterium P.aeruginosa. The chain is Forkhead transcription factor fkh-9 from Caenorhabditis elegans.